The sequence spans 392 residues: Protein RecA (392 aa).

The disordered stretch occupies residues 1-21 (MALETKPAQDPATEIKHELDP). 83–90 (GPESSGKT) provides a ligand contact to ATP. The disordered stretch occupies residues 372-392 (DAAKDTKATAAPAAKSSRAKA). Residues 379-392 (ATAAPAAKSSRAKA) show a composition bias toward low complexity.

The protein belongs to the RecA family.

The protein resides in the cytoplasm. Can catalyze the hydrolysis of ATP in the presence of single-stranded DNA, the ATP-dependent uptake of single-stranded DNA by duplex DNA, and the ATP-dependent hybridization of homologous single-stranded DNAs. It interacts with LexA causing its activation and leading to its autocatalytic cleavage. This chain is Protein RecA, found in Bifidobacterium breve.